The following is a 360-amino-acid chain: DNA replication and repair protein RecF (360 aa).

33–40 (GENGSGKT) provides a ligand contact to ATP.

It belongs to the RecF family.

The protein resides in the cytoplasm. Its function is as follows. The RecF protein is involved in DNA metabolism; it is required for DNA replication and normal SOS inducibility. RecF binds preferentially to single-stranded, linear DNA. It also seems to bind ATP. In Rickettsia conorii (strain ATCC VR-613 / Malish 7), this protein is DNA replication and repair protein RecF.